Here is a 283-residue protein sequence, read N- to C-terminus: Probable endonuclease 4 (283 aa).

Residues H69, H113, E148, D182, H185, H217, D230, H232, and E262 each contribute to the Zn(2+) site.

The protein belongs to the AP endonuclease 2 family. Zn(2+) serves as cofactor.

The catalysed reaction is Endonucleolytic cleavage to 5'-phosphooligonucleotide end-products.. Endonuclease IV plays a role in DNA repair. It cleaves phosphodiester bonds at apurinic or apyrimidinic (AP) sites, generating a 3'-hydroxyl group and a 5'-terminal sugar phosphate. This Bifidobacterium longum (strain DJO10A) protein is Probable endonuclease 4.